A 449-amino-acid polypeptide reads, in one-letter code: Methylenetetrahydrofolate--tRNA-(uracil-5-)-methyltransferase TrmFO (449 aa).

10–15 serves as a coordination point for FAD; the sequence is GGGLAG.

It belongs to the MnmG family. TrmFO subfamily. FAD serves as cofactor.

It is found in the cytoplasm. The catalysed reaction is uridine(54) in tRNA + (6R)-5,10-methylene-5,6,7,8-tetrahydrofolate + NADH + H(+) = 5-methyluridine(54) in tRNA + (6S)-5,6,7,8-tetrahydrofolate + NAD(+). It carries out the reaction uridine(54) in tRNA + (6R)-5,10-methylene-5,6,7,8-tetrahydrofolate + NADPH + H(+) = 5-methyluridine(54) in tRNA + (6S)-5,6,7,8-tetrahydrofolate + NADP(+). Catalyzes the folate-dependent formation of 5-methyl-uridine at position 54 (M-5-U54) in all tRNAs. In Sphingopyxis alaskensis (strain DSM 13593 / LMG 18877 / RB2256) (Sphingomonas alaskensis), this protein is Methylenetetrahydrofolate--tRNA-(uracil-5-)-methyltransferase TrmFO.